The following is a 441-amino-acid chain: Enolase (441 aa).

Q164 contributes to the (2R)-2-phosphoglycerate binding site. E206 acts as the Proton donor in catalysis. 3 residues coordinate Mg(2+): D243, E289, and D316. K341, R370, S371, and K392 together coordinate (2R)-2-phosphoglycerate. Catalysis depends on K341, which acts as the Proton acceptor.

It belongs to the enolase family. Mg(2+) serves as cofactor.

It is found in the cytoplasm. It localises to the secreted. Its subcellular location is the cell surface. It catalyses the reaction (2R)-2-phosphoglycerate = phosphoenolpyruvate + H2O. It participates in carbohydrate degradation; glycolysis; pyruvate from D-glyceraldehyde 3-phosphate: step 4/5. Its function is as follows. Catalyzes the reversible conversion of 2-phosphoglycerate (2-PG) into phosphoenolpyruvate (PEP). It is essential for the degradation of carbohydrates via glycolysis. This is Enolase from Leuconostoc citreum (strain KM20).